The sequence spans 863 residues: Paramyosin (863 aa).

The nonhelical region stretch occupies residues 1–18; the sequence is MSESHVKISRTIIRGTSP. Residues 19–836 are a coiled coil; it reads STVRLESRVR…ERTITIKRTI (818 aa). The segment at 837-863 is nonhelical region; it reads GGPGSRAVSVVREINSVSRGNRATSIM.

It belongs to the paramyosin family. In terms of assembly, homodimer.

It is found in the cytoplasm. Its subcellular location is the myofibril. Paramyosin is a major structural component of many thick filaments isolated from invertebrate muscles. The protein is Paramyosin (PMY) of Taenia saginata (Beef tapeworm).